A 173-amino-acid chain; its full sequence is ATP-dependent protease subunit HslV (173 aa).

Thr-2 is an active-site residue. Positions 158, 161, and 164 each coordinate Na(+).

The protein belongs to the peptidase T1B family. HslV subfamily. As to quaternary structure, a double ring-shaped homohexamer of HslV is capped on each side by a ring-shaped HslU homohexamer. The assembly of the HslU/HslV complex is dependent on binding of ATP.

The protein resides in the cytoplasm. It catalyses the reaction ATP-dependent cleavage of peptide bonds with broad specificity.. With respect to regulation, allosterically activated by HslU binding. Its function is as follows. Protease subunit of a proteasome-like degradation complex believed to be a general protein degrading machinery. This is ATP-dependent protease subunit HslV from Actinobacillus succinogenes (strain ATCC 55618 / DSM 22257 / CCUG 43843 / 130Z).